A 229-amino-acid polypeptide reads, in one-letter code: Large ribosomal subunit protein uL1 (229 aa).

The protein belongs to the universal ribosomal protein uL1 family. In terms of assembly, part of the 50S ribosomal subunit.

Functionally, binds directly to 23S rRNA. The L1 stalk is quite mobile in the ribosome, and is involved in E site tRNA release. Its function is as follows. Protein L1 is also a translational repressor protein, it controls the translation of the L11 operon by binding to its mRNA. This chain is Large ribosomal subunit protein uL1, found in Desulforamulus reducens (strain ATCC BAA-1160 / DSM 100696 / MI-1) (Desulfotomaculum reducens).